A 140-amino-acid polypeptide reads, in one-letter code: Small ribosomal subunit protein eS17y (140 aa).

Belongs to the eukaryotic ribosomal protein eS17 family.

This chain is Small ribosomal subunit protein eS17y (RPS17B), found in Arabidopsis thaliana (Mouse-ear cress).